Here is a 770-residue protein sequence, read N- to C-terminus: DNA ligase 1 (770 aa).

Residues 1–18 (MSTGEGTAEQTATGTPAQ) show a composition bias toward low complexity. The tract at residues 1 to 27 (MSTGEGTAEQTATGTPAQNGRESIPSD) is disordered. Residues 57 to 61 (DAEFD), 106 to 107 (SL), and glutamate 142 contribute to the NAD(+) site. Lysine 144 functions as the N6-AMP-lysine intermediate in the catalytic mechanism. NAD(+) is bound by residues arginine 165, glutamate 202, lysine 318, and lysine 342. 4 residues coordinate Zn(2+): cysteine 439, cysteine 442, cysteine 458, and cysteine 464. The region spanning 657–746 (STPRTLEGLT…PAAVGDAAEA (90 aa)) is the BRCT domain. The interval 741 to 770 (GDAAEADGGDAPEESAALQEEKAAAVEETA) is disordered. The span at 744–753 (AEADGGDAPE) shows a compositional bias: acidic residues. Residues 759–770 (QEEKAAAVEETA) are compositionally biased toward basic and acidic residues.

This sequence belongs to the NAD-dependent DNA ligase family. LigA subfamily. It depends on Mg(2+) as a cofactor. Mn(2+) serves as cofactor.

The catalysed reaction is NAD(+) + (deoxyribonucleotide)n-3'-hydroxyl + 5'-phospho-(deoxyribonucleotide)m = (deoxyribonucleotide)n+m + AMP + beta-nicotinamide D-nucleotide.. DNA ligase that catalyzes the formation of phosphodiester linkages between 5'-phosphoryl and 3'-hydroxyl groups in double-stranded DNA using NAD as a coenzyme and as the energy source for the reaction. It is essential for DNA replication and repair of damaged DNA. The protein is DNA ligase 1 of Pseudarthrobacter chlorophenolicus (strain ATCC 700700 / DSM 12829 / CIP 107037 / JCM 12360 / KCTC 9906 / NCIMB 13794 / A6) (Arthrobacter chlorophenolicus).